A 221-amino-acid chain; its full sequence is Histidine biosynthesis bifunctional protein HisIE (221 aa).

A phosphoribosyl-AMP cyclohydrolase region spans residues M1–I129. A phosphoribosyl-ATP pyrophosphohydrolase region spans residues C130–N221.

This sequence in the N-terminal section; belongs to the PRA-CH family. In the C-terminal section; belongs to the PRA-PH family.

It is found in the cytoplasm. It catalyses the reaction 1-(5-phospho-beta-D-ribosyl)-ATP + H2O = 1-(5-phospho-beta-D-ribosyl)-5'-AMP + diphosphate + H(+). The catalysed reaction is 1-(5-phospho-beta-D-ribosyl)-5'-AMP + H2O = 1-(5-phospho-beta-D-ribosyl)-5-[(5-phospho-beta-D-ribosylamino)methylideneamino]imidazole-4-carboxamide. It participates in amino-acid biosynthesis; L-histidine biosynthesis; L-histidine from 5-phospho-alpha-D-ribose 1-diphosphate: step 2/9. The protein operates within amino-acid biosynthesis; L-histidine biosynthesis; L-histidine from 5-phospho-alpha-D-ribose 1-diphosphate: step 3/9. The protein is Histidine biosynthesis bifunctional protein HisIE of Prochlorococcus marinus subsp. pastoris (strain CCMP1986 / NIES-2087 / MED4).